Reading from the N-terminus, the 203-residue chain is Holliday junction branch migration complex subunit RuvA (203 aa).

The interval 1–64 is domain I; it reads MIGRLRGIII…EDAQLLYGFN (64 aa). The segment at 65-142 is domain II; sequence NKQERTLFKE…KGLHGDLFTP (78 aa). The interval 143–154 is flexible linker; sequence AADLVLTSPASP. A domain III region spans residues 155-203; sequence ATDDAEQEAVAALVALGYKPQEASRMVSKIARPDASSETLIREALHAAL.

This sequence belongs to the RuvA family. In terms of assembly, homotetramer. Forms an RuvA(8)-RuvB(12)-Holliday junction (HJ) complex. HJ DNA is sandwiched between 2 RuvA tetramers; dsDNA enters through RuvA and exits via RuvB. An RuvB hexamer assembles on each DNA strand where it exits the tetramer. Each RuvB hexamer is contacted by two RuvA subunits (via domain III) on 2 adjacent RuvB subunits; this complex drives branch migration. In the full resolvosome a probable DNA-RuvA(4)-RuvB(12)-RuvC(2) complex forms which resolves the HJ.

It is found in the cytoplasm. In terms of biological role, the RuvA-RuvB-RuvC complex processes Holliday junction (HJ) DNA during genetic recombination and DNA repair, while the RuvA-RuvB complex plays an important role in the rescue of blocked DNA replication forks via replication fork reversal (RFR). RuvA specifically binds to HJ cruciform DNA, conferring on it an open structure. The RuvB hexamer acts as an ATP-dependent pump, pulling dsDNA into and through the RuvAB complex. HJ branch migration allows RuvC to scan DNA until it finds its consensus sequence, where it cleaves and resolves the cruciform DNA. The chain is Holliday junction branch migration complex subunit RuvA from Escherichia fergusonii (strain ATCC 35469 / DSM 13698 / CCUG 18766 / IAM 14443 / JCM 21226 / LMG 7866 / NBRC 102419 / NCTC 12128 / CDC 0568-73).